A 294-amino-acid chain; its full sequence is Enoyl-CoA hydratase domain-containing protein 3, mitochondrial (294 aa).

The transit peptide at 1–61 (MSWLRSCGER…IILNNPQQRN (61 aa)) directs the protein to the mitochondrion.

The protein belongs to the enoyl-CoA hydratase/isomerase family.

It is found in the mitochondrion. May play a role in fatty acid biosynthesis and insulin sensitivity. This Xenopus laevis (African clawed frog) protein is Enoyl-CoA hydratase domain-containing protein 3, mitochondrial (echdc3).